Consider the following 620-residue polypeptide: UPF0313 protein BT_0254 (620 aa).

Residues 311 to 591 (AYDMIKFSVN…AQRQFFFWYK (281 aa)) form the Radical SAM core domain. Cysteine 325, cysteine 329, and cysteine 332 together coordinate [4Fe-4S] cluster.

This sequence belongs to the UPF0313 family. It depends on [4Fe-4S] cluster as a cofactor.

In Bacteroides thetaiotaomicron (strain ATCC 29148 / DSM 2079 / JCM 5827 / CCUG 10774 / NCTC 10582 / VPI-5482 / E50), this protein is UPF0313 protein BT_0254.